Consider the following 249-residue polypeptide: Sulfate transporter CysZ (249 aa).

4 helical membrane-spanning segments follow: residues leucine 26–alanine 46, valine 71–leucine 91, leucine 150–phenylalanine 170, and leucine 206–methionine 226.

Belongs to the CysZ family.

The protein localises to the cell inner membrane. High affinity, high specificity proton-dependent sulfate transporter, which mediates sulfate uptake. Provides the sulfur source for the cysteine synthesis pathway. This chain is Sulfate transporter CysZ, found in Pseudomonas fluorescens (strain ATCC BAA-477 / NRRL B-23932 / Pf-5).